We begin with the raw amino-acid sequence, 99 residues long: UPF0320 protein YER188C-A (99 aa).

The protein belongs to the UPF0320 family.

In Saccharomyces cerevisiae (strain ATCC 204508 / S288c) (Baker's yeast), this protein is UPF0320 protein YER188C-A.